A 215-amino-acid polypeptide reads, in one-letter code: Beta-crystallin A3-1 (215 aa).

The tract at residues 1 to 30 (MEIPVDQTEREDITSEKMAQINPLPVHLGP) is N-terminal arm. 2 Beta/gamma crystallin 'Greek key' domains span residues 31-70 (WKITVYDQENFQGKRMEFTSSCANIMECGFDNIRSLKVEC) and 71-117 (GAWI…RPIC). The interval 118–123 (SANHIE) is connecting peptide. Beta/gamma crystallin 'Greek key' domains lie at 124 to 165 (SKLV…KVQC) and 166 to 214 (GAWV…RRIQ).

This sequence belongs to the beta/gamma-crystallin family. As to quaternary structure, homo/heterodimer, or complexes of higher-order. The structure of beta-crystallin oligomers seems to be stabilized through interactions between the N-terminal arms. The N-terminus is blocked.

In terms of biological role, crystallins are the dominant structural components of the vertebrate eye lens. The chain is Beta-crystallin A3-1 from Aquarana catesbeiana (American bullfrog).